Here is a 330-residue protein sequence, read N- to C-terminus: HTH-type transcriptional regulator GanR (330 aa).

Residues 2–57 (ATIKDIAQEAGFSISTVSRVLNNDESLSVPDETREKIYEAAEKLNYRKKTVRPLVK) enclose the HTH lacI-type domain. Positions 4 to 23 (IKDIAQEAGFSISTVSRVLN) form a DNA-binding region, H-T-H motif.

Negatively regulates the expression of the ganSPQAB operon. Inhibits transcription of the operon by binding to an operator in the promoter region. In the presence of galactobiose, GanR dissociates from the promoter, resulting in the expression of the gan operon. The protein is HTH-type transcriptional regulator GanR of Bacillus subtilis (strain 168).